The primary structure comprises 143 residues: Large ribosomal subunit protein uL15 (143 aa).

The segment at 1-59 (MELNGIKPSLGAKHAKRRVGRGIGSGLGKTAGRGHKGQKSRAGGYHKVGFEGGQMPMQR) is disordered. A compositionally biased stretch (gly residues) spans 21-31 (RGIGSGLGKTA).

It belongs to the universal ribosomal protein uL15 family. As to quaternary structure, part of the 50S ribosomal subunit.

In terms of biological role, binds to the 23S rRNA. This Polaromonas sp. (strain JS666 / ATCC BAA-500) protein is Large ribosomal subunit protein uL15.